The following is a 359-amino-acid chain: MNIYDQLQAVEDRYEELGELLSDPDVVSDTKRFMELSREEANTRETVTAYREYKQVIQTISDAEEMIKDASGDPELEEMAKEELKESKAAKEEYEEKLKILLLPKDPNDDKNIILEIRGAAGGDEAALFAGDLLTMYQKYAETQGWRFEVMESSVNGVGGIKEVVAMVSGQSVYSKLKYESGAHRVQRVPVTESQGRVHTSTATVLVMPEVEEVEYDIDPKDLRIDIYHASGAGGQNVNKVATAVRMVHIPTGIKVEMQEERTQQKNRDKAMKIIRARVADHFAQIAQDEQDAERKSTVGTGDRSERIRTYNFPQNRVTDHRIGLTLQKLDTILSGKMDEVIDALVMYDQTKKLESLNN.

An N5-methylglutamine modification is found at Gln-236.

This sequence belongs to the prokaryotic/mitochondrial release factor family. In terms of processing, methylated by PrmC. Methylation increases the termination efficiency of RF1.

It localises to the cytoplasm. Functionally, peptide chain release factor 1 directs the termination of translation in response to the peptide chain termination codons UAG and UAA. This is Peptide chain release factor 1 from Streptococcus pyogenes serotype M3 (strain ATCC BAA-595 / MGAS315).